Reading from the N-terminus, the 131-residue chain is Putative pre-16S rRNA nuclease (131 aa).

It belongs to the YqgF nuclease family.

It localises to the cytoplasm. Its function is as follows. Could be a nuclease involved in processing of the 5'-end of pre-16S rRNA. This Bordetella petrii (strain ATCC BAA-461 / DSM 12804 / CCUG 43448) protein is Putative pre-16S rRNA nuclease.